The following is a 294-amino-acid chain: NAD kinase (294 aa).

Catalysis depends on D74, which acts as the Proton acceptor. NAD(+) contacts are provided by residues 74 to 75 (DG), 148 to 149 (ND), R159, R176, D178, 189 to 194 (TAYALS), and Q247.

Belongs to the NAD kinase family. Requires a divalent metal cation as cofactor.

It localises to the cytoplasm. It carries out the reaction NAD(+) + ATP = ADP + NADP(+) + H(+). Its function is as follows. Involved in the regulation of the intracellular balance of NAD and NADP, and is a key enzyme in the biosynthesis of NADP. Catalyzes specifically the phosphorylation on 2'-hydroxyl of the adenosine moiety of NAD to yield NADP. The polypeptide is NAD kinase (Azoarcus sp. (strain BH72)).